The primary structure comprises 318 residues: Olfactory receptor 52D1 (318 aa).

Residues 1–28 are Extracellular-facing; sequence MSDSNLSDNHLPDTFFLTGIPGLEAAHF. An N-linked (GlcNAc...) asparagine glycan is attached at N5. Residues 29–49 traverse the membrane as a helical segment; it reads WIAIPFCAMYLVALVGNAALI. At 50 to 57 the chain is on the cytoplasmic side; sequence LVIAMDNA. The chain crosses the membrane as a helical span at residues 58-78; it reads LHAPMYLFLCLLSLTDLALSS. The Extracellular segment spans residues 79-102; it reads TTVPKMLAILWLHAGEISFGGCLA. C100 and C192 are oxidised to a cystine. Residues 103-123 traverse the membrane as a helical segment; it reads QMFCVHSIYALESSILLAMAF. Residues 124–142 lie on the Cytoplasmic side of the membrane; the sequence is DRYVAICNPLRYTTILNHA. Residues 143 to 163 traverse the membrane as a helical segment; it reads VIGRIGFVGLFRSVAIVSPFI. Residues 164–199 lie on the Extracellular side of the membrane; the sequence is FLLRRLPYCGHRVMTHTYCEHMGIARLACANITVNI. A helical membrane pass occupies residues 200–220; that stretch reads VYGLTVALLAMGLDSILIAIS. Residues 221-240 are Cytoplasmic-facing; that stretch reads YGFILHAVFHLPSHDAQHKA. Residues 241–261 traverse the membrane as a helical segment; it reads LSTCGSHIGIILVFYIPAFFS. The Extracellular segment spans residues 262–277; that stretch reads FLTHRFGHHEVPKHVH. Residues 278–298 form a helical membrane-spanning segment; it reads IFLANLYVLVPPVLNPILYGA. Residues 299–318 lie on the Cytoplasmic side of the membrane; it reads RTKEIRSRLLKLLHLGKTSI.

This sequence belongs to the G-protein coupled receptor 1 family.

The protein localises to the cell membrane. In terms of biological role, odorant receptor. The polypeptide is Olfactory receptor 52D1 (OR52D1) (Homo sapiens (Human)).